We begin with the raw amino-acid sequence, 85 residues long: Beta-mammal/insect toxin Lqhb1 (85 aa).

The signal sequence occupies residues 1 to 19; sequence MKIIIFLIVSSLMLIGVKT. In terms of domain architecture, LCN-type CS-alpha/beta spans 20-82; the sequence is DNGYLLNKAT…LWAYATNKCN (63 aa). Intrachain disulfides connect C31-C81, C35-C56, C42-C63, and C46-C65.

The protein belongs to the long (4 C-C) scorpion toxin superfamily. Sodium channel inhibitor family. Expressed by the venom gland.

The protein resides in the secreted. Its function is as follows. Beta toxins bind voltage-independently at site-4 of sodium channels (Nav) and shift the voltage of activation toward more negative potentials thereby affecting sodium channel activation and promoting spontaneous and repetitive firing. Competes, with apparent high affinity, with anti-insect and anti-mammalian beta-toxins for binding to cockroach and rat brain synaptosomes, respectively. Also competes with an anti-mammalian alpha-toxin on binding to rat brain sodium channels. Has a weak effect on cardiac sodium channels and a marked effect on rat brain and skeletal muscle sodium channels. The polypeptide is Beta-mammal/insect toxin Lqhb1 (Leiurus hebraeus (Hebrew deathstalker scorpion)).